The primary structure comprises 520 residues: Cytochrome P450 monooxygenase 176 (520 aa).

A glycan (N-linked (GlcNAc...) asparagine) is linked at N6. The chain crosses the membrane as a helical span at residues 10–27 (LLVVAGALFLTFLTTRFI). 2 N-linked (GlcNAc...) asparagine glycosylation sites follow: N141 and N270. Heme is bound at residue C445. An N-linked (GlcNAc...) asparagine glycan is attached at N517.

This sequence belongs to the cytochrome P450 family. Heme serves as cofactor.

It localises to the membrane. It functions in the pathway secondary metabolite biosynthesis. In terms of biological role, cytochrome P450 monooxygenase that is able to use delta(6)-protoilludene as a substrate to produce delta(6)-protoilludene-5-ol and an unidentified hydroxyprotoilludene. Is also able to use phenanthrene as a substrate for oxidation. This is Cytochrome P450 monooxygenase 176 from Postia placenta (strain ATCC 44394 / Madison 698-R) (Brown rot fungus).